We begin with the raw amino-acid sequence, 337 residues long: Inositol 2-dehydrogenase (337 aa).

This sequence belongs to the Gfo/Idh/MocA family. Homotetramer.

It catalyses the reaction myo-inositol + NAD(+) = scyllo-inosose + NADH + H(+). Its function is as follows. Involved in the oxidation of myo-inositol (MI) to 2-keto-myo-inositol (2KMI or 2-inosose). The chain is Inositol 2-dehydrogenase from Corynebacterium glutamicum (strain R).